A 241-amino-acid polypeptide reads, in one-letter code: Deoxyribose-phosphate aldolase (241 aa).

The Proton donor/acceptor role is filled by D95. Residue K159 is the Schiff-base intermediate with acetaldehyde of the active site. The active-site Proton donor/acceptor is K188.

This sequence belongs to the DeoC/FbaB aldolase family. DeoC type 1 subfamily.

It localises to the cytoplasm. The catalysed reaction is 2-deoxy-D-ribose 5-phosphate = D-glyceraldehyde 3-phosphate + acetaldehyde. It functions in the pathway carbohydrate degradation; 2-deoxy-D-ribose 1-phosphate degradation; D-glyceraldehyde 3-phosphate and acetaldehyde from 2-deoxy-alpha-D-ribose 1-phosphate: step 2/2. Its function is as follows. Catalyzes a reversible aldol reaction between acetaldehyde and D-glyceraldehyde 3-phosphate to generate 2-deoxy-D-ribose 5-phosphate. This Rhodopirellula baltica (strain DSM 10527 / NCIMB 13988 / SH1) protein is Deoxyribose-phosphate aldolase.